A 651-amino-acid chain; its full sequence is UvrABC system protein B (651 aa).

The Helicase ATP-binding domain occupies 25–178; it reads RGISCGAKEQ…CQLQERLVEL (154 aa). ATP is bound at residue 38-45; it reads GVTGSGKT. The Beta-hairpin signature appears at 91–114; the sequence is YYDYYQPEAYIPQSDVYIEKDALI. A Helicase C-terminal domain is found at 427–591; the sequence is DGQIHDVMCE…IVPRTIQKPV (165 aa). Positions 593-615 are disordered; sequence TSLSERVGSSRKKVSRDTNTDPA. The region spanning 616-651 is the UVR domain; the sequence is NRDIVELQKEMLLCAENLDFERAVEIRNEIKRLTAP.

Belongs to the UvrB family. As to quaternary structure, forms a heterotetramer with UvrA during the search for lesions. Interacts with UvrC in an incision complex.

Its subcellular location is the cytoplasm. Its function is as follows. The UvrABC repair system catalyzes the recognition and processing of DNA lesions. A damage recognition complex composed of 2 UvrA and 2 UvrB subunits scans DNA for abnormalities. Upon binding of the UvrA(2)B(2) complex to a putative damaged site, the DNA wraps around one UvrB monomer. DNA wrap is dependent on ATP binding by UvrB and probably causes local melting of the DNA helix, facilitating insertion of UvrB beta-hairpin between the DNA strands. Then UvrB probes one DNA strand for the presence of a lesion. If a lesion is found the UvrA subunits dissociate and the UvrB-DNA preincision complex is formed. This complex is subsequently bound by UvrC and the second UvrB is released. If no lesion is found, the DNA wraps around the other UvrB subunit that will check the other stand for damage. The sequence is that of UvrABC system protein B from Anaplasma marginale (strain Florida).